The sequence spans 125 residues: Large ribosomal subunit protein bL17 (125 aa).

Belongs to the bacterial ribosomal protein bL17 family. In terms of assembly, part of the 50S ribosomal subunit. Contacts protein L32.

This chain is Large ribosomal subunit protein bL17, found in Acinetobacter baumannii (strain AB307-0294).